We begin with the raw amino-acid sequence, 354 residues long: Non-structural protein NS2 (354 aa).

Disordered regions lie at residues 163-196 (NERE…DNEA) and 229-269 (DERD…THIT). Basic and acidic residues-rich tracts occupy residues 178–196 (SREE…DNEA) and 237–249 (DERG…KTLS). Residues 250–260 (DDDDQGEDASD) show a composition bias toward acidic residues.

In terms of biological role, single-stranded RNA-binding protein. This chain is Non-structural protein NS2 (Segment-8), found in Bluetongue virus 17 (isolate USA) (BTV 17).